The chain runs to 122 residues: Large ribosomal subunit protein uL14 (122 aa).

The protein belongs to the universal ribosomal protein uL14 family. Part of the 50S ribosomal subunit. Forms a cluster with proteins L3 and L19. In the 70S ribosome, L14 and L19 interact and together make contacts with the 16S rRNA in bridges B5 and B8.

Functionally, binds to 23S rRNA. Forms part of two intersubunit bridges in the 70S ribosome. This chain is Large ribosomal subunit protein uL14, found in Lactobacillus delbrueckii subsp. bulgaricus (strain ATCC BAA-365 / Lb-18).